An 82-amino-acid polypeptide reads, in one-letter code: Large ribosomal subunit protein uL23 (82 aa).

It belongs to the universal ribosomal protein uL23 family. Part of the 50S ribosomal subunit. Contacts protein L29.

Binds to 23S rRNA. One of the proteins that surrounds the polypeptide exit tunnel on the outside of the ribosome. The polypeptide is Large ribosomal subunit protein uL23 (Sulfolobus acidocaldarius (strain ATCC 33909 / DSM 639 / JCM 8929 / NBRC 15157 / NCIMB 11770)).